The sequence spans 1032 residues: Calmodulin-binding transcription activator 3 (1032 aa).

Residues 15–141 constitute a DNA-binding region (CG-1); the sequence is VGQILSEARH…YLEVKGSRVS (127 aa). The interval 146 to 197 is disordered; that stretch reads RMQRTEDAARSPQETGDALTSEHDGYASCSFNQNDHSNHSQTTDSASVNGFH. Polar residues predominate over residues 174–195; that stretch reads CSFNQNDHSNHSQTTDSASVNG. Phosphoserine is present on S272. ANK repeat units lie at residues 661-690, 694-723, and 733-762; these read GGQG…SVDF, NGWT…APGT, and SGST…RAHV. 2 consecutive IQ domains span residues 852 to 881 and 875 to 904; these read VQAA…RIIK and TRQR…SVGV. The calmodulin-binding stretch occupies residues 900–922; sequence WSVGVLEKVILRWRRKGAGLRGF. Positions 945–987 form a coiled coil; sequence KQGRKQTEDRLQKALARVKSMVQYPEARDQYRRLLNVVNDIQE. S964 is subject to Phosphoserine.

This sequence belongs to the CAMTA family. In terms of assembly, interacts with SR1IP1. Interacts with DSC1. Ubiquinated during pathogen infection. Ubiquitination leads to its subsequent proteasome-dependent degradation, thus allowing the establishment of plant defense response. Expressed in roots, stems, leaves, carpels, and siliques, but not in stigmas or other parts of the flower.

Its subcellular location is the nucleus. Functionally, transcription activator that binds to the DNA consensus sequence 5'-[ACG]CGCG[GTC]-3'. Binds calmodulin in a calcium-dependent manner in vitro. Regulates transcriptional activity in response to calcium signals. Involved in freezing tolerance in association with CAMTA1 and CAMTA2. Required for the cold-induced expression of DREB1B/CBF1, DREB1C/CBF2, ZAT12 and GOLS3. Involved in response to cold. Contributes together with CAMTA5 to the positive regulation of the cold-induced expression of DREB1A/CBF3, DREB1B/CBF1 and DREB1C/CBF2. Involved together with CAMTA2 and CAMTA4 in the positive regulation of a general stress response (GSR). Involved in the regulation of GSR amplitude downstream of MEKK1. Involved in the regulation of a set of genes involved in defense responses against pathogens. Involved in the regulation of both basal resistance and systemic acquired resistance (SAR). Acts as negative regulator of plant immunity. Binds to the promoter of the defense-related gene EDS1 and represses its expression. Binds to the promoter of the defense-related gene NDR1 and represses its expression. Involved in defense against insects. Required for tolerance to the generalist herbivore Trichoplusia ni, and contributes to the positive regulation of genes associated with glucosinolate metabolism. Required for tolerance to Bradysia impatiens larvae. Mediates herbivore-induced wound response. Required for wound-induced jasmonate accumulation. Involved in the regulation of ethylene-induced senescence by binding to the promoter of the senescence-inducer gene EIN3 and repressing its expression. This chain is Calmodulin-binding transcription activator 3, found in Arabidopsis thaliana (Mouse-ear cress).